The chain runs to 321 residues: Sideroflexin-3 (321 aa).

N-acetylmethionine is present on M1. The next 4 helical transmembrane spans lie at 146–164 (LGTAYVSATTGAVATALGL), 174–194 (LVGRFVPFAAVAAANCINIPL), 225–245 (IFQVVVSRIGMAIPAMAIPPV), and 266–286 (LQVGLVGFCLVFATPLCCALF).

This sequence belongs to the sideroflexin family.

The protein localises to the mitochondrion membrane. The enzyme catalyses L-serine(in) = L-serine(out). Mitochondrial serine transporter that mediates transport of serine into mitochondria, an important step of the one-carbon metabolism pathway. Mitochondrial serine is converted to glycine and formate, which then exits to the cytosol where it is used to generate the charged folates that serve as one-carbon donors. This Rattus norvegicus (Rat) protein is Sideroflexin-3 (Sfxn3).